A 571-amino-acid chain; its full sequence is Mannan endo-1,4-beta-mannosidase B (571 aa).

An N-terminal signal peptide occupies residues Met-1–Ala-19. Positions Val-22–Asn-141 constitute a CBM6 domain. The 295-residue stretch at Pro-165–Asp-459 folds into the GH26 domain. Trp-286 serves as a coordination point for substrate. Catalysis depends on Glu-319, which acts as the Proton donor. Positions 324 and 379 each coordinate substrate. Residue Glu-407 is the Nucleophile of the active site. CBM10 domains are found at residues Glu-491–Gly-527 and Val-534–Ile-571.

This sequence belongs to the glycosyl hydrolase 26 family.

The catalysed reaction is Random hydrolysis of (1-&gt;4)-beta-D-mannosidic linkages in mannans, galactomannans and glucomannans.. The chain is Mannan endo-1,4-beta-mannosidase B (MANB) from Piromyces sp.